A 627-amino-acid chain; its full sequence is Membrane protein insertase YidC (627 aa).

The next 6 helical transmembrane spans lie at 3–23 (KNTVIGLVLIGLVIFGFSWLN), 376–396 (WGLIILLLTLGIKLLISPLAY), 450–470 (LPMLLQFPFLIAMYMYFPTTI), 502–522 (FYGNHVSLFCLLMSISNILYI), 534–554 (EGMAMLKWMPYITTVMFLFFF), and 558–578 (ASGLCYYYFLSSIITVIQYMS).

This sequence belongs to the OXA1/ALB3/YidC family. Type 1 subfamily. In terms of assembly, interacts with the Sec translocase complex via SecD. Specifically interacts with transmembrane segments of nascent integral membrane proteins during membrane integration.

It localises to the cell inner membrane. In terms of biological role, required for the insertion and/or proper folding and/or complex formation of integral membrane proteins into the membrane. Involved in integration of membrane proteins that insert both dependently and independently of the Sec translocase complex, as well as at least some lipoproteins. Aids folding of multispanning membrane proteins. This is Membrane protein insertase YidC from Porphyromonas gingivalis (strain ATCC 33277 / DSM 20709 / CIP 103683 / JCM 12257 / NCTC 11834 / 2561).